The sequence spans 602 residues: Leucine-rich repeat-containing protein 40 (602 aa).

The segment at 1–22 is disordered; sequence MSRLKRIAGQDPRAGFKEGGRD. Serine 71 carries the phosphoserine modification. 20 LRR repeats span residues 83–104, 106–127, 129–150, 152–173, 175–196, 198–219, 221–242, 244–265, 266–286, 290–311, 313–335, 336–356, 400–421, 426–447, 450–472, 473–494, 496–517, 519–540, 543–564, and 566–586; these read DLTK…LRLL, ALTV…IREL, NLQK…ITNL, NLKC…FEQF, NLED…FSSL, SLVR…INRM, RLKH…LAGM, SLEL…PSCS, LLKE…EHLK, SILV…IILL, SLER…GNLH, LKFL…IINK, TLKI…VFDA, IITS…MVEL, MVSD…CVLQ, KLTF…VESL, RLQT…LYRI, TLET…KMKM, NLTT…LGNC, and NLRT…AILM.

This Pongo abelii (Sumatran orangutan) protein is Leucine-rich repeat-containing protein 40 (LRRC40).